The following is a 77-amino-acid chain: Translation initiation factor IF-1, chloroplastic (77 aa).

The region spanning 1–71 (MKEQKLIHEG…TRGRIIYRLR (71 aa)) is the S1-like domain.

Belongs to the IF-1 family. In terms of assembly, component of the 30S ribosomal translation pre-initiation complex which assembles on the 30S ribosome in the order IF-2 and IF-3, IF-1 and N-formylmethionyl-tRNA(fMet); mRNA recruitment can occur at any time during PIC assembly.

It localises to the plastid. The protein resides in the chloroplast. In terms of biological role, one of the essential components for the initiation of protein synthesis. Stabilizes the binding of IF-2 and IF-3 on the 30S subunit to which N-formylmethionyl-tRNA(fMet) subsequently binds. Helps modulate mRNA selection, yielding the 30S pre-initiation complex (PIC). Upon addition of the 50S ribosomal subunit IF-1, IF-2 and IF-3 are released leaving the mature 70S translation initiation complex. The sequence is that of Translation initiation factor IF-1, chloroplastic from Ceratophyllum demersum (Rigid hornwort).